Reading from the N-terminus, the 265-residue chain is Adenosylcobinamide-GDP ribazoletransferase (265 aa).

Helical transmembrane passes span 51–71 (LVGV…QLIF), 72–92 (PDSV…GAFH), 121–140 (IGTY…FVLW), and 203–223 (VASL…LFAF).

The protein belongs to the CobS family. Mg(2+) serves as cofactor.

Its subcellular location is the cell inner membrane. It carries out the reaction alpha-ribazole + adenosylcob(III)inamide-GDP = adenosylcob(III)alamin + GMP + H(+). The enzyme catalyses alpha-ribazole 5'-phosphate + adenosylcob(III)inamide-GDP = adenosylcob(III)alamin 5'-phosphate + GMP + H(+). It participates in cofactor biosynthesis; adenosylcobalamin biosynthesis; adenosylcobalamin from cob(II)yrinate a,c-diamide: step 7/7. Joins adenosylcobinamide-GDP and alpha-ribazole to generate adenosylcobalamin (Ado-cobalamin). Also synthesizes adenosylcobalamin 5'-phosphate from adenosylcobinamide-GDP and alpha-ribazole 5'-phosphate. The chain is Adenosylcobinamide-GDP ribazoletransferase from Vibrio parahaemolyticus serotype O3:K6 (strain RIMD 2210633).